Reading from the N-terminus, the 328-residue chain is NADH-quinone oxidoreductase subunit H 1 (328 aa).

8 helical membrane-spanning segments follow: residues 11 to 31 (VVKA…FLLF), 81 to 101 (LAPV…PWAP), 116 to 136 (VLVI…GGWA), 154 to 174 (ISYE…TGSV), 189 to 209 (LFPQ…EAGW), 235 to 257 (GLFF…TFFL), 269 to 289 (IPGF…LYWI), and 308 to 328 (VLLP…ALWA).

Belongs to the complex I subunit 1 family. NDH-1 is composed of 14 different subunits. Subunits NuoA, H, J, K, L, M, N constitute the membrane sector of the complex.

It is found in the cell membrane. The catalysed reaction is a quinone + NADH + 5 H(+)(in) = a quinol + NAD(+) + 4 H(+)(out). In terms of biological role, NDH-1 shuttles electrons from NADH, via FMN and iron-sulfur (Fe-S) centers, to quinones in the respiratory chain. The immediate electron acceptor for the enzyme in this species is believed to be ubiquinone. Couples the redox reaction to proton translocation (for every two electrons transferred, four hydrogen ions are translocated across the cytoplasmic membrane), and thus conserves the redox energy in a proton gradient. This subunit may bind ubiquinone. The polypeptide is NADH-quinone oxidoreductase subunit H 1 (Symbiobacterium thermophilum (strain DSM 24528 / JCM 14929 / IAM 14863 / T)).